Reading from the N-terminus, the 996-residue chain is Disease resistance protein RGA4 (996 aa).

The tract at residues 1-176 (MEAALLSGFI…PRIHEADLVG (176 aa)) is structured coiled coil (CC) domain. Residues 111 to 138 (NLQLAQQLQRLKRMAAEANQRKQRYTAA) adopt a coiled-coil conformation. The NB-ARC domain maps to 180-462 (DREELLEQLA…RWLAEGFVEP (283 aa)). LRR repeat units lie at residues 481–503 (RNII…TYGM), 504–528 (MREF…KFVP), 529–549 (KYVR…NFNG), 577–599 (LRVL…ICNL), 600–621 (VLLK…IAKL), 622–644 (KDLE…VFGL), 698–722 (MNKL…DLRE), 759–781 (PCYL…VTSL), 782–804 (RGLK…ALSN), 805–830 (LSYL…GFPR), and 851–874 (LPFL…QIEC).

This sequence belongs to the disease resistance NB-LRR family. As to quaternary structure, forms homodimer or heterodimer with RGA5 through its coiled coil (CC) domain. In terms of tissue distribution, expressed in leaves.

The protein localises to the cytoplasm. Disease resistance (R) protein. Resistance proteins guard the plant against pathogens that contain an appropriate avirulence protein via an indirect interaction with this avirulence protein. That triggers a defense system including the hypersensitive response, which restricts the pathogen growth. Contribution of RGA5 is required to recognize the effector avirulence proteins AVR-Pia and AVR1-CO39 from M.oryzae. Acts as a constitutively active cell death inducer that is repressed by RGA5. Immune response triggered by the RGA4-RGA5 -mediated recognition of AVR1-CO39 confers resistance to X.oryzae pathovars. The protein is Disease resistance protein RGA4 of Oryza sativa subsp. japonica (Rice).